A 183-amino-acid chain; its full sequence is Dual-action ribosomal maturation protein DarP (183 aa).

Belongs to the DarP family.

The protein resides in the cytoplasm. Its function is as follows. Member of a network of 50S ribosomal subunit biogenesis factors which assembles along the 30S-50S interface, preventing incorrect 23S rRNA structures from forming. Promotes peptidyl transferase center (PTC) maturation. In Shigella flexneri, this protein is Dual-action ribosomal maturation protein DarP.